A 153-amino-acid chain; its full sequence is Nucleoside diphosphate kinase (153 aa).

Positions 11, 59, 87, 93, 104, and 114 each coordinate ATP. The active-site Pros-phosphohistidine intermediate is His-117.

It belongs to the NDK family. Requires Mg(2+) as cofactor.

It catalyses the reaction a 2'-deoxyribonucleoside 5'-diphosphate + ATP = a 2'-deoxyribonucleoside 5'-triphosphate + ADP. The enzyme catalyses a ribonucleoside 5'-diphosphate + ATP = a ribonucleoside 5'-triphosphate + ADP. Its function is as follows. Major role in the synthesis of nucleoside triphosphates other than ATP. The ATP gamma phosphate is transferred to the NDP beta phosphate via a ping-pong mechanism, using a phosphorylated active-site intermediate. The sequence is that of Nucleoside diphosphate kinase (swoH) from Emericella nidulans (strain FGSC A4 / ATCC 38163 / CBS 112.46 / NRRL 194 / M139) (Aspergillus nidulans).